Here is a 150-residue protein sequence, read N- to C-terminus: Macrodomain Ter protein (150 aa).

The protein belongs to the MatP family. In terms of assembly, homodimer.

The protein localises to the cytoplasm. Required for spatial organization of the terminus region of the chromosome (Ter macrodomain) during the cell cycle. Prevents early segregation of duplicated Ter macrodomains during cell division. Binds specifically to matS, which is a 13 bp signature motif repeated within the Ter macrodomain. This chain is Macrodomain Ter protein, found in Erwinia tasmaniensis (strain DSM 17950 / CFBP 7177 / CIP 109463 / NCPPB 4357 / Et1/99).